Reading from the N-terminus, the 778-residue chain is Ribosome biogenesis protein BOP1 homolog (778 aa).

Residues 1 to 10 (MAKKQDRKRK) show a composition bias toward basic residues. Residues 1-152 (MAKKQDRKRK…DSDTSDEEDI (152 aa)) form a disordered region. Composition is skewed to acidic residues over residues 44 to 53 (EDSTDDEGID), 60 to 72 (SSED…DEEG), and 84 to 105 (SSDE…DEEE). Positions 114–124 (TTSSKAETNNE) are enriched in polar residues. Residues 142 to 151 (EDSDTSDEED) are compositionally biased toward acidic residues. 7 WD repeats span residues 438 to 479 (GHTD…RTIE), 481 to 519 (EDVV…KLLI), 564 to 606 (NHFK…SQIP), 609 to 647 (KSKG…LIKK), 650 to 689 (TNSK…KPYQ), 693 to 732 (LHRN…DLLQ), and 748 to 778 (RDDF…RLYT).

It belongs to the WD repeat BOP1/ERB1 family.

The protein resides in the nucleus. It is found in the nucleolus. It localises to the nucleoplasm. Functionally, required for maturation of ribosomal RNAs and formation of the large ribosomal subunit. The polypeptide is Ribosome biogenesis protein BOP1 homolog (Drosophila willistoni (Fruit fly)).